We begin with the raw amino-acid sequence, 89 residues long: Small ribosomal subunit protein uS15 (89 aa).

This sequence belongs to the universal ribosomal protein uS15 family. Part of the 30S ribosomal subunit. Forms a bridge to the 50S subunit in the 70S ribosome, contacting the 23S rRNA.

Functionally, one of the primary rRNA binding proteins, it binds directly to 16S rRNA where it helps nucleate assembly of the platform of the 30S subunit by binding and bridging several RNA helices of the 16S rRNA. Its function is as follows. Forms an intersubunit bridge (bridge B4) with the 23S rRNA of the 50S subunit in the ribosome. The polypeptide is Small ribosomal subunit protein uS15 (Methylorubrum populi (strain ATCC BAA-705 / NCIMB 13946 / BJ001) (Methylobacterium populi)).